The chain runs to 1026 residues: mRNA transport homolog 4 (1026 aa).

A Helicase ATP-binding domain is found at 134–290 (ILCIDNNQSV…WVASIKQQPV (157 aa)). 147-154 (AHTSAGKT) is an ATP binding site. Positions 238 to 241 (DEIH) match the DEIH box motif. Residues 360 to 564 (NVLKIIRSVA…NMVLNLMRVE (205 aa)) enclose the Helicase C-terminal domain.

The protein belongs to the helicase family. SKI2 subfamily.

The protein resides in the nucleus. This Caenorhabditis elegans protein is mRNA transport homolog 4 (mtr-4).